The chain runs to 1060 residues: FACT complex subunit SPT16 (1060 aa).

The disordered stretch occupies residues 458–490 (FNDDNETQKENNNNNNKRPGLSQTSNTTALKLE). The segment covering 478-490 (LSQTSNTTALKLE) has biased composition (polar residues). The stretch at 508-532 (NADDANSEKLRQEIQIKLHEKRLQE) forms a coiled coil. Residues 977–1060 (QGESDEEEES…AKADRNSGFD (84 aa)) are disordered. Composition is skewed to acidic residues over residues 979-990 (ESDEEEESDEES) and 997-1044 (EDPQ…EDWD). The segment covering 1045-1060 (ALERKAAKADRNSGFD) has biased composition (basic and acidic residues).

It belongs to the peptidase M24 family. SPT16 subfamily. Forms a stable heterodimer with POB3. The SPT16-POB3 dimer weakly associates with multiple molecules of NHP6 to form the FACT complex.

The protein resides in the nucleus. The protein localises to the chromosome. Its function is as follows. Component of the FACT complex, a general chromatin factor that acts to reorganize nucleosomes. The FACT complex is involved in multiple processes that require DNA as a template such as mRNA elongation, DNA replication and DNA repair. During transcription elongation the FACT complex acts as a histone chaperone that both destabilizes and restores nucleosomal structure. It facilitates the passage of RNA polymerase II and transcription by promoting the dissociation of one histone H2A-H2B dimer from the nucleosome, then subsequently promotes the reestablishment of the nucleosome following the passage of RNA polymerase II. This chain is FACT complex subunit SPT16 (CDC68), found in Candida albicans (strain SC5314 / ATCC MYA-2876) (Yeast).